The primary structure comprises 331 residues: ATPase GET3 (331 aa).

An ATP-binding site is contributed by Lys32–Thr39. Asp61 is a catalytic residue. Positions 235 and 262 each coordinate ATP. Positions 273 and 276 each coordinate Zn(2+).

Belongs to the arsA ATPase family. In terms of assembly, homodimer.

The protein localises to the cytoplasm. Its subcellular location is the endoplasmic reticulum. In terms of biological role, ATPase required for the post-translational delivery of tail-anchored (TA) proteins to the endoplasmic reticulum. Recognizes and selectively binds the transmembrane domain of TA proteins in the cytosol. This complex then targets to the endoplasmic reticulum by membrane-bound receptors, where the tail-anchored protein is released for insertion. This process is regulated by ATP binding and hydrolysis. ATP binding drives the homodimer towards the closed dimer state, facilitating recognition of newly synthesized TA membrane proteins. ATP hydrolysis is required for insertion. Subsequently, the homodimer reverts towards the open dimer state, lowering its affinity for the membrane-bound receptor, and returning it to the cytosol to initiate a new round of targeting. The chain is ATPase GET3 from Malassezia globosa (strain ATCC MYA-4612 / CBS 7966) (Dandruff-associated fungus).